A 190-amino-acid polypeptide reads, in one-letter code: dCTP deaminase, dUMP-forming (190 aa).

Residues 101–106 (KSSLGR), aspartate 119, 127–129 (TLE), glutamine 148, tyrosine 162, and glutamine 174 contribute to the dCTP site. Residue glutamate 129 is the Proton donor/acceptor of the active site. The interval 163–190 (GSSQVGSKYQGQRGPTPSKSYQNFVKSN) is disordered.

Belongs to the dCTP deaminase family. In terms of assembly, homotrimer.

It catalyses the reaction dCTP + 2 H2O = dUMP + NH4(+) + diphosphate. Its pathway is pyrimidine metabolism; dUMP biosynthesis; dUMP from dCTP: step 1/1. Functionally, bifunctional enzyme that catalyzes both the deamination of dCTP to dUTP and the hydrolysis of dUTP to dUMP without releasing the toxic dUTP intermediate. In Mycolicibacterium gilvum (strain PYR-GCK) (Mycobacterium gilvum (strain PYR-GCK)), this protein is dCTP deaminase, dUMP-forming.